The chain runs to 370 residues: Chloromuconate cycloisomerase (370 aa).

Lysine 165 serves as the catalytic Proton acceptor. Mn(2+)-binding residues include aspartate 194, glutamate 220, and aspartate 245. The Proton donor role is filled by glutamate 323.

The protein belongs to the mandelate racemase/muconate lactonizing enzyme family. Mn(2+) serves as cofactor.

It catalyses the reaction 2-[(2R)-2-chloro-2,5-dihydro-5-oxofuryl]acetate = 3-chloro-cis,cis-muconate + H(+). It functions in the pathway aromatic compound metabolism; 3-chlorocatechol degradation. Highly active toward chlorinated substrates but retains diminished activity toward the non-chlorinated substrates. The chain is Chloromuconate cycloisomerase (clcB) from Pseudomonas putida (Arthrobacter siderocapsulatus).